Here is a 450-residue protein sequence, read N- to C-terminus: Signal recognition particle protein (450 aa).

Residues 107-114 (GLQGVGKT), 190-194 (DTAGR), and 248-251 (TKTD) each bind GTP.

The protein belongs to the GTP-binding SRP family. SRP54 subfamily. In terms of assembly, part of the signal recognition particle protein translocation system, which is composed of SRP and FtsY. SRP is a ribonucleoprotein composed of Ffh and a 4.5S RNA molecule.

The protein resides in the cytoplasm. The catalysed reaction is GTP + H2O = GDP + phosphate + H(+). Its function is as follows. Involved in targeting and insertion of nascent membrane proteins into the cytoplasmic membrane. Binds to the hydrophobic signal sequence of the ribosome-nascent chain (RNC) as it emerges from the ribosomes. The SRP-RNC complex is then targeted to the cytoplasmic membrane where it interacts with the SRP receptor FtsY. Interaction with FtsY leads to the transfer of the RNC complex to the Sec translocase for insertion into the membrane, the hydrolysis of GTP by both Ffh and FtsY, and the dissociation of the SRP-FtsY complex into the individual components. This chain is Signal recognition particle protein, found in Buchnera aphidicola subsp. Schizaphis graminum (strain Sg).